We begin with the raw amino-acid sequence, 236 residues long: NAD(P)H-hydrate epimerase (236 aa).

In terms of domain architecture, YjeF N-terminal spans 11-217 (AAALDQELMS…AIASKYGFEV (207 aa)). Residue 61 to 65 (NNGGD) participates in (6S)-NADPHX binding. 2 residues coordinate K(+): Asn-62 and Asp-123. Residues 127-133 (GFSFSGE) and Asp-156 contribute to the (6S)-NADPHX site. Ser-159 lines the K(+) pocket.

Belongs to the NnrE/AIBP family. It depends on K(+) as a cofactor.

The protein resides in the cytoplasm. Its subcellular location is the mitochondrion. It catalyses the reaction (6R)-NADHX = (6S)-NADHX. It carries out the reaction (6R)-NADPHX = (6S)-NADPHX. Its function is as follows. Catalyzes the epimerization of the S- and R-forms of NAD(P)HX, a damaged form of NAD(P)H that is a result of enzymatic or heat-dependent hydration. This is a prerequisite for the S-specific NAD(P)H-hydrate dehydratase to allow the repair of both epimers of NAD(P)HX. This is NAD(P)H-hydrate epimerase from Fusarium vanettenii (strain ATCC MYA-4622 / CBS 123669 / FGSC 9596 / NRRL 45880 / 77-13-4) (Fusarium solani subsp. pisi).